A 92-amino-acid polypeptide reads, in one-letter code: Small ribosomal subunit protein uS19 (92 aa).

Belongs to the universal ribosomal protein uS19 family.

Its function is as follows. Protein S19 forms a complex with S13 that binds strongly to the 16S ribosomal RNA. The sequence is that of Small ribosomal subunit protein uS19 (rpsS) from Halalkalibacterium halodurans (strain ATCC BAA-125 / DSM 18197 / FERM 7344 / JCM 9153 / C-125) (Bacillus halodurans).